Reading from the N-terminus, the 1071-residue chain is Carbamoyl phosphate synthase large chain (1071 aa).

Residues 1–403 form a carboxyphosphate synthetic domain region; it reads MPKRTDLKSI…SFQKALRGLE (403 aa). In terms of domain architecture, ATP-grasp 1 spans 133 to 328; the sequence is KEAMEKIGLS…IAKVAANWAV (196 aa). Residues Arg169, Gly175, Gly176, Gln208, Val210, Glu215, Gly241, Val242, His243, Gln285, and Glu299 each coordinate ATP. The Mg(2+) site is built by Gln285, Glu299, and Asn301. Residues Gln285, Glu299, and Asn301 each coordinate Mn(2+). Residues 404 to 548 form an oligomerization domain region; the sequence is TGLCGFNPAR…YSTYEEECES (145 aa). The carbamoyl phosphate synthetic domain stretch occupies residues 549–930; that stretch reads RPSDRKKVMI…AYYKAQLGAG (382 aa). An ATP-grasp 2 domain is found at 673-864; that stretch reads QKVLNDLGLR…LAKVGARCMA (192 aa). Residues Arg709, Phe748, Leu750, Glu755, Gly780, Ile781, His782, Ser783, Gln823, and Glu835 each contribute to the ATP site. Residues Gln823, Glu835, and Asn837 each contribute to the Mg(2+) site. Residues Gln823, Glu835, and Asn837 each coordinate Mn(2+). Residues 931 to 1071 form the MGS-like domain; sequence ERLNPTGKIF…ELHGRLKNRN (141 aa). The segment at 931-1071 is allosteric domain; that stretch reads ERLNPTGKIF…ELHGRLKNRN (141 aa).

Belongs to the CarB family. In terms of assembly, composed of two chains; the small (or glutamine) chain promotes the hydrolysis of glutamine to ammonia, which is used by the large (or ammonia) chain to synthesize carbamoyl phosphate. Tetramer of heterodimers (alpha,beta)4. It depends on Mg(2+) as a cofactor. Mn(2+) serves as cofactor.

The catalysed reaction is hydrogencarbonate + L-glutamine + 2 ATP + H2O = carbamoyl phosphate + L-glutamate + 2 ADP + phosphate + 2 H(+). It catalyses the reaction hydrogencarbonate + NH4(+) + 2 ATP = carbamoyl phosphate + 2 ADP + phosphate + 2 H(+). It participates in amino-acid biosynthesis; L-arginine biosynthesis; carbamoyl phosphate from bicarbonate: step 1/1. It functions in the pathway pyrimidine metabolism; UMP biosynthesis via de novo pathway; (S)-dihydroorotate from bicarbonate: step 1/3. Large subunit of the glutamine-dependent carbamoyl phosphate synthetase (CPSase). CPSase catalyzes the formation of carbamoyl phosphate from the ammonia moiety of glutamine, carbonate, and phosphate donated by ATP, constituting the first step of 2 biosynthetic pathways, one leading to arginine and/or urea and the other to pyrimidine nucleotides. The large subunit (synthetase) binds the substrates ammonia (free or transferred from glutamine from the small subunit), hydrogencarbonate and ATP and carries out an ATP-coupled ligase reaction, activating hydrogencarbonate by forming carboxy phosphate which reacts with ammonia to form carbamoyl phosphate. The chain is Carbamoyl phosphate synthase large chain from Neisseria gonorrhoeae.